A 208-amino-acid chain; its full sequence is MIVIKDAHFLTSSSQLFQCPASLTSEMVILGRSNVGKSSFINTLLGKNLAKSSATPGKTRLANFFSTTWEDKENALTTTFNVIDLPGFGYAKVSKSLKKEWEGFLWELLSVRISIKLFIHLVDARHLDLEIDKNAKENIQALLRPDQAYLSLFTKFDKLNKNEQHRLFLNAPKPFLINTTHFNALSSKYPTLEIVRQTLLKYLLTNPL.

The region spanning 23–205 (LTSEMVILGR…RQTLLKYLLT (183 aa)) is the EngB-type G domain. GTP contacts are provided by residues 31–38 (GRSNVGKS), 57–61 (GKTRL), 84–87 (DLPG), 154–157 (TKFD), and 182–184 (FNA). Mg(2+)-binding residues include Ser-38 and Thr-59.

This sequence belongs to the TRAFAC class TrmE-Era-EngA-EngB-Septin-like GTPase superfamily. EngB GTPase family. Mg(2+) serves as cofactor.

Its function is as follows. Necessary for normal cell division and for the maintenance of normal septation. This chain is Probable GTP-binding protein EngB, found in Helicobacter pylori (strain G27).